Here is a 520-residue protein sequence, read N- to C-terminus: Dihydropyrimidinase 2 (520 aa).

His59, His61, and Lys152 together coordinate Zn(2+). Position 152 is an N6-carboxylysine (Lys152). Tyr157 is a substrate binding site. His185 and His241 together coordinate Zn(2+). Ser291 provides a ligand contact to substrate. Residue Asp319 coordinates Zn(2+). Asn340 provides a ligand contact to substrate.

It belongs to the metallo-dependent hydrolases superfamily. Hydantoinase/dihydropyrimidinase family. Homotetramer. It depends on Zn(2+) as a cofactor. Post-translationally, carboxylation allows a single lysine to coordinate two zinc ions. In terms of tissue distribution, body wall muscles.

It carries out the reaction 5,6-dihydrouracil + H2O = 3-(carbamoylamino)propanoate + H(+). This is Dihydropyrimidinase 2 (dhp-2) from Caenorhabditis elegans.